Here is a 386-residue protein sequence, read N- to C-terminus: Succinyl-diaminopimelate desuccinylase (386 aa).

His77 serves as a coordination point for Zn(2+). Asp79 is a catalytic residue. Asp110 provides a ligand contact to Zn(2+). The active-site Proton acceptor is the Glu144. Residues Glu145, Glu173, and His359 each contribute to the Zn(2+) site.

This sequence belongs to the peptidase M20A family. DapE subfamily. As to quaternary structure, homodimer. Zn(2+) is required as a cofactor. It depends on Co(2+) as a cofactor.

It catalyses the reaction N-succinyl-(2S,6S)-2,6-diaminopimelate + H2O = (2S,6S)-2,6-diaminopimelate + succinate. It participates in amino-acid biosynthesis; L-lysine biosynthesis via DAP pathway; LL-2,6-diaminopimelate from (S)-tetrahydrodipicolinate (succinylase route): step 3/3. Functionally, catalyzes the hydrolysis of N-succinyl-L,L-diaminopimelic acid (SDAP), forming succinate and LL-2,6-diaminopimelate (DAP), an intermediate involved in the bacterial biosynthesis of lysine and meso-diaminopimelic acid, an essential component of bacterial cell walls. The chain is Succinyl-diaminopimelate desuccinylase from Ralstonia pickettii (strain 12J).